Reading from the N-terminus, the 436-residue chain is Gamma-glutamyl phosphate reductase (436 aa).

This sequence belongs to the gamma-glutamyl phosphate reductase family.

Its subcellular location is the cytoplasm. The catalysed reaction is L-glutamate 5-semialdehyde + phosphate + NADP(+) = L-glutamyl 5-phosphate + NADPH + H(+). It participates in amino-acid biosynthesis; L-proline biosynthesis; L-glutamate 5-semialdehyde from L-glutamate: step 2/2. Its function is as follows. Catalyzes the NADPH-dependent reduction of L-glutamate 5-phosphate into L-glutamate 5-semialdehyde and phosphate. The product spontaneously undergoes cyclization to form 1-pyrroline-5-carboxylate. This is Gamma-glutamyl phosphate reductase from Prochlorococcus marinus (strain SARG / CCMP1375 / SS120).